The chain runs to 164 residues: Phosphopantetheine adenylyltransferase (164 aa).

Residue Thr-10 participates in substrate binding. Residues 10-11 (TF) and His-18 contribute to the ATP site. Lys-44, Leu-76, and Arg-90 together coordinate substrate. ATP contacts are provided by residues 91 to 93 (GLR), Glu-101, and 126 to 132 (YAFISSS).

It belongs to the bacterial CoaD family. In terms of assembly, homohexamer. The cofactor is Mg(2+).

The protein localises to the cytoplasm. It carries out the reaction (R)-4'-phosphopantetheine + ATP + H(+) = 3'-dephospho-CoA + diphosphate. Its pathway is cofactor biosynthesis; coenzyme A biosynthesis; CoA from (R)-pantothenate: step 4/5. In terms of biological role, reversibly transfers an adenylyl group from ATP to 4'-phosphopantetheine, yielding dephospho-CoA (dPCoA) and pyrophosphate. The protein is Phosphopantetheine adenylyltransferase of Halorhodospira halophila (strain DSM 244 / SL1) (Ectothiorhodospira halophila (strain DSM 244 / SL1)).